We begin with the raw amino-acid sequence, 925 residues long: Neuropilin-2 (925 aa).

Positions 1–22 (MDMFPLTWIFLALYFSGHKVRS) are cleaved as a signal peptide. Residues 23 to 858 (QQDPPCGGRL…EKSWLYTLDP (836 aa)) are Extracellular-facing. 3 cysteine pairs are disulfide-bonded: Cys28/Cys55, Cys83/Cys105, and Cys149/Cys175. CUB domains follow at residues 28-142 (CGGR…YEIF) and 149-267 (CSKN…YYLV). Asn152 and Asn157 each carry an N-linked (GlcNAc...) asparagine glycan. Glu197, Asp211, and Asp252 together coordinate Ca(2+). Cys208 and Cys230 are joined by a disulfide. Intrachain disulfides connect Cys277–Cys427 and Cys434–Cys592. F5/8 type C domains lie at 277-427 (CNAP…LFGC) and 434-592 (CSNM…VLGC). The span at 297-310 (STFSDGRWTPQQSR) shows a compositional bias: polar residues. Positions 297-317 (STFSDGRWTPQQSRLHGDDNG) are disordered. The tract at residues 601-621 (VETLGPTVKSEETTTPYPMDE) is disordered. The N-linked (GlcNAc...) asparagine glycan is linked to Asn629. An MAM domain is found at 642–802 (SGFNCNFDFP…TDVPLENCME (161 aa)). Over residues 820–830 (YEDEIDDDYEG) the composition is skewed to acidic residues. Residues 820-849 (YEDEIDDDYEGDWNNSSSTSGAGSPSSGKE) are disordered. 2 N-linked (GlcNAc...) asparagine glycosylation sites follow: Asn833 and Asn834. The segment covering 835–846 (SSSTSGAGSPSS) has biased composition (low complexity). A helical transmembrane segment spans residues 859–883 (ILITIIAMSSLGVLLGATCAGLLLY). Residues 884-925 (CTCSYSGLSSRSCTTLENYNFELYDGLKHKVKINHQKCCSEA) are Cytoplasmic-facing.

This sequence belongs to the neuropilin family. As to quaternary structure, heterodimer with NRP1. Binds PLXNB1. Found in certain neuronal populations of the CNS, including dorsal root ganglia, and in other non-neuronal tissues including mesenchymal tissue lining in the ribs.

It localises to the membrane. High affinity receptor for semaphorins 3C, 3F, VEGF-165 and VEGF-145 isoforms of VEGF, and the PLGF-2 isoform of PGF. The protein is Neuropilin-2 (Nrp2) of Rattus norvegicus (Rat).